The sequence spans 427 residues: Gamma-glutamyl phosphate reductase (427 aa).

The protein belongs to the gamma-glutamyl phosphate reductase family.

It localises to the cytoplasm. The enzyme catalyses L-glutamate 5-semialdehyde + phosphate + NADP(+) = L-glutamyl 5-phosphate + NADPH + H(+). The protein operates within amino-acid biosynthesis; L-proline biosynthesis; L-glutamate 5-semialdehyde from L-glutamate: step 2/2. Functionally, catalyzes the NADPH-dependent reduction of L-glutamate 5-phosphate into L-glutamate 5-semialdehyde and phosphate. The product spontaneously undergoes cyclization to form 1-pyrroline-5-carboxylate. The chain is Gamma-glutamyl phosphate reductase from Rhizobium etli (strain CIAT 652).